A 389-amino-acid polypeptide reads, in one-letter code: Putative zinc finger CCCH domain-containing protein 10 (389 aa).

Over residues 1–11 (MANVSFTFDSQ) the composition is skewed to polar residues. The disordered stretch occupies residues 1–110 (MANVSFTFDS…QDRRGSESRM (110 aa)). 2 stretches are compositionally biased toward basic and acidic residues: residues 12-52 (EQNK…RVSE) and 86-110 (RSHETESRLWQRARTQDRRGSESRM). 2 C3H1-type zinc fingers span residues 131 to 157 (RPGEDNCLFYMKNHLCEWGSECCYNHP) and 158 to 190 (PLQEIPCRIGKKLDCKAGACKRGSNCPFNHPKE). A disordered region spans residues 183–296 (CPFNHPKERD…ATATGKVSGK (114 aa)). 2 stretches are compositionally biased toward basic and acidic residues: residues 204 to 243 (PDLRRNDSGRRYNTESRSWPENKEKEVGQFRDHQDSKEDA) and 251 to 284 (RPRDVEMRKRSRSPDFRAKTETKEHREAEERSSR).

The chain is Putative zinc finger CCCH domain-containing protein 10 from Arabidopsis thaliana (Mouse-ear cress).